The primary structure comprises 154 residues: Putative pre-16S rRNA nuclease (154 aa).

The protein belongs to the YqgF nuclease family.

The protein resides in the cytoplasm. Its function is as follows. Could be a nuclease involved in processing of the 5'-end of pre-16S rRNA. This chain is Putative pre-16S rRNA nuclease, found in Rickettsia peacockii (strain Rustic).